Reading from the N-terminus, the 411-residue chain is MKQELIERFTRYVKVDTQSDPESNTCPSTQGQWDLARMLVEELKAIGMEEVTVDENGYVMATLPANTDKNVPTIGFLAHLDTAPEFTGTNVNPQIIEQYDGGDIVLNEQQHIILSPKDFPELANYKGHTLITTDGTTLLGADDKAGIAEIMTAMNYLIQHPEIKHGKVRVAFTPDEEIGRGPHKFDVAQFGAQFAYTVDGGPLGELEYESFNAAEAKITIKGKNVHPGTAKGKMINSIKIALEFQQQLPANEAPEHTDGYEGFYHLLSFQGNVEETKLYYIIRDFDREQFEARKAKMKDIAAALAQKYGNDRISIEINDQYYNMREKIEPVHHIVDIAHEAMTNLGIEPKVKPIRGGTDGSQLSYMGLPTPNIFAGGENFHGRYEYISVDTMVKAAEVIVEIIKLFEQKTS.

His79 contacts Zn(2+). Residue Asp81 is part of the active site. Position 142 (Asp142) interacts with Zn(2+). Residue Glu176 is the Proton acceptor of the active site. Zn(2+)-binding residues include Glu177, Asp199, and His381.

It belongs to the peptidase M20B family. Zn(2+) is required as a cofactor.

The protein localises to the cytoplasm. It catalyses the reaction Release of the N-terminal residue from a tripeptide.. Functionally, cleaves the N-terminal amino acid of tripeptides. This Geobacillus thermodenitrificans (strain NG80-2) protein is Peptidase T.